A 353-amino-acid chain; its full sequence is Peroxisome assembly protein 12-B (353 aa).

Residues 1–19 (MAERGAHITTTSPLDDRPS) are Peroxisomal matrix-facing. The chain crosses the membrane as a helical span at residues 20 to 47 (IFEVVAQESLMAAARPALHHIVKVLAES). At 48-51 (NPAR) the chain is on the cytoplasmic side. Residues 52–76 (YGTLWRWFDELYTLLECLLQQHYLS) traverse the membrane as a helical segment. At 77–104 (WASASFSENFYGLKRVTLGKQVGQRNLA) the chain is on the peroxisomal matrix side. Residues 105–134 (RKEYWKSLLLLVLIPYLRIKLEKLVNSLRE) form a helical membrane-spanning segment. Over 135 to 139 (EEDYS) the chain is Cytoplasmic. A helical transmembrane segment spans residues 140-178 (IQNPTSFHKRCYKAILASYPFLKLGWEAWFLFYQLRYIL). At 179–243 (WNGKHHSPLL…LGAVTLSVSS (65 aa)) the chain is on the peroxisomal matrix side. Residues 244–271 (SLSLGVFFLQFLDWWYSAENRETLKSLG) form a helical membrane-spanning segment. Over 272 to 353 (NLPVPPPPIH…HLIKLYTPDG (82 aa)) the chain is Cytoplasmic. Positions 298, 301, 319, and 322 each coordinate Zn(2+). The RING-type; degenerate zinc-finger motif lies at 298–337 (CPLCRKVRVNDTALGTSGYVFCYRCAYYYVKTHQRCPVSG).

The protein belongs to the pex2/pex10/pex12 family. In terms of assembly, component of the PEX2-PEX10-PEX12 retrotranslocation channel.

It is found in the peroxisome membrane. It functions in the pathway protein modification; protein ubiquitination. In terms of biological role, component of a retrotranslocation channel required for peroxisome organization by mediating export of the PEX5 receptor from peroxisomes to the cytosol, thereby promoting PEX5 recycling. The retrotranslocation channel is composed of PEX2, PEX10 and PEX12; each subunit contributing transmembrane segments that coassemble into an open channel that specifically allows the passage of PEX5 through the peroxisomal membrane. PEX12 also regulates PEX5 recycling by activating the E3 ubiquitin-protein ligase activity of PEX10. When PEX5 recycling is compromised, PEX12 stimulates PEX10-mediated polyubiquitination of PEX5, leading to its subsequent degradation. This Xenopus laevis (African clawed frog) protein is Peroxisome assembly protein 12-B.